A 360-amino-acid chain; its full sequence is Methyltransferase pvhD (360 aa).

Residues 201–202 (SG), aspartate 227, 251–252 (DL), arginine 267, and arginine 268 each bind S-adenosyl-L-methionine.

This sequence belongs to the class I-like SAM-binding methyltransferase superfamily. Cation-independent O-methyltransferase family.

The protein operates within secondary metabolite biosynthesis. Its function is as follows. Methyltransferase; part of the gene cluster that mediates the biosynthesis of varicidin A, an antifungal natural product containing a cis-octahydrodecalin core. The PKS module of pvhA together with the enoylreductase pvhC catalyze the formation of the polyketide unit which is then conjugated to L-isoleucine by the condensation domain of the NRPS module. Activity of the Dieckmann cyclase domain (RED) of pvhA results in release of an acyclic tetramate. The cytochrome P450 monooxygenase pvhE then catalyzes the oxidation of the C21 methyl group to a to carboxylate group. The methyltransferase pvhD then further methylates the pvhE product. The Diels-Alderase pvhB is able to catalyze Diels-Alder cycloaddition using both pvhE and pvhD products as substrates to form the decalin ring, yielding varicidin B and A, respectively. This chain is Methyltransferase pvhD, found in Talaromyces variabilis (Penicillium variabile).